We begin with the raw amino-acid sequence, 214 residues long: MGDILDYNTTALFICDPQKYYLDRVGGIDVIVRNIKCLIDSCKELEIKTFMTKHNPSIYDEIIEELEPSNHPVFEKTLYSMYTKDLKKNIDELYNSNVRDPTNYLRTVILAGFETHVCIIQTALDLIREGYTVHVITDATASIDSLEYTASLKRLKQSGVYLTTTEAVLFQLLRDDANPKSSKIIDLITNRSISLPSYYKEDEYGVQITHSKSN.

It belongs to the isochorismatase family.

The polypeptide is Isochorismatase family protein 2B (Dictyostelium discoideum (Social amoeba)).